A 629-amino-acid polypeptide reads, in one-letter code: tRNA uridine 5-carboxymethylaminomethyl modification enzyme MnmG (629 aa).

14 to 19 contributes to the FAD binding site; it reads GAGHAG. 274–288 lines the NAD(+) pocket; sequence GPRYCPSIEDKVVRF.

This sequence belongs to the MnmG family. As to quaternary structure, homodimer. Heterotetramer of two MnmE and two MnmG subunits. Requires FAD as cofactor.

It localises to the cytoplasm. In terms of biological role, NAD-binding protein involved in the addition of a carboxymethylaminomethyl (cmnm) group at the wobble position (U34) of certain tRNAs, forming tRNA-cmnm(5)s(2)U34. The sequence is that of tRNA uridine 5-carboxymethylaminomethyl modification enzyme MnmG from Xylella fastidiosa (strain Temecula1 / ATCC 700964).